Here is a 375-residue protein sequence, read N- to C-terminus: Glucokinase 1 (375 aa).

25–30 (CDVGGS) is a binding site for ATP.

Belongs to the bacterial glucokinase family. In terms of assembly, monomer. In terms of processing, the N-terminus is blocked.

It carries out the reaction D-glucose + ATP = D-glucose 6-phosphate + ADP + H(+). This chain is Glucokinase 1 (GK1), found in Trichomonas vaginalis.